A 396-amino-acid polypeptide reads, in one-letter code: S-adenosylmethionine synthase 2 (396 aa).

E13 lines the Mg(2+) pocket. H19 is an ATP binding site. A K(+)-binding site is contributed by E47. The L-methionine site is built by E60 and Q103. Residues 171-173 (DGK), 239-242 (SGRF), D250, 256-257 (RK), A273, K277, and K281 each bind ATP. Residue D250 coordinates L-methionine. An L-methionine-binding site is contributed by K281.

The protein belongs to the AdoMet synthase family. Homotetramer. Mn(2+) serves as cofactor. It depends on Mg(2+) as a cofactor. Requires Co(2+) as cofactor. The cofactor is K(+).

The protein localises to the cytoplasm. It carries out the reaction L-methionine + ATP + H2O = S-adenosyl-L-methionine + phosphate + diphosphate. The protein operates within amino-acid biosynthesis; S-adenosyl-L-methionine biosynthesis; S-adenosyl-L-methionine from L-methionine: step 1/1. Functionally, catalyzes the formation of S-adenosylmethionine from methionine and ATP. The reaction comprises two steps that are both catalyzed by the same enzyme: formation of S-adenosylmethionine (AdoMet) and triphosphate, and subsequent hydrolysis of the triphosphate. The chain is S-adenosylmethionine synthase 2 (SAM2) from Dianthus caryophyllus (Carnation).